The sequence spans 413 residues: Serine hydroxymethyltransferase (413 aa).

(6S)-5,6,7,8-tetrahydrofolate is bound by residues L116 and 120–122 (GHL). K225 carries the post-translational modification N6-(pyridoxal phosphate)lysine. 349–351 (SPF) contacts (6S)-5,6,7,8-tetrahydrofolate.

This sequence belongs to the SHMT family. Homodimer. Requires pyridoxal 5'-phosphate as cofactor.

It is found in the cytoplasm. The catalysed reaction is (6R)-5,10-methylene-5,6,7,8-tetrahydrofolate + glycine + H2O = (6S)-5,6,7,8-tetrahydrofolate + L-serine. It functions in the pathway one-carbon metabolism; tetrahydrofolate interconversion. It participates in amino-acid biosynthesis; glycine biosynthesis; glycine from L-serine: step 1/1. In terms of biological role, catalyzes the reversible interconversion of serine and glycine with tetrahydrofolate (THF) serving as the one-carbon carrier. This reaction serves as the major source of one-carbon groups required for the biosynthesis of purines, thymidylate, methionine, and other important biomolecules. Also exhibits THF-independent aldolase activity toward beta-hydroxyamino acids, producing glycine and aldehydes, via a retro-aldol mechanism. This chain is Serine hydroxymethyltransferase, found in Levilactobacillus brevis (strain ATCC 367 / BCRC 12310 / CIP 105137 / JCM 1170 / LMG 11437 / NCIMB 947 / NCTC 947) (Lactobacillus brevis).